The chain runs to 503 residues: Cytochrome P450 11B1, mitochondrial (503 aa).

The transit peptide at 1 to 24 directs the protein to the mitochondrion; the sequence is MALWAKARVWMAGPWLSLHRARPL. Cysteine 450 contributes to the heme binding site.

Belongs to the cytochrome P450 family. It depends on heme as a cofactor.

The protein localises to the mitochondrion inner membrane. The enzyme catalyses a steroid + 2 reduced [adrenodoxin] + O2 + 2 H(+) = an 11beta-hydroxysteroid + 2 oxidized [adrenodoxin] + H2O. It catalyses the reaction 11-deoxycortisol + 2 reduced [adrenodoxin] + O2 + 2 H(+) = cortisol + 2 oxidized [adrenodoxin] + H2O. The catalysed reaction is 21-hydroxyprogesterone + 2 reduced [adrenodoxin] + O2 + 2 H(+) = corticosterone + 2 oxidized [adrenodoxin] + H2O. It carries out the reaction corticosterone + 2 reduced [adrenodoxin] + O2 + 2 H(+) = 18-hydroxycorticosterone + 2 oxidized [adrenodoxin] + H2O. The enzyme catalyses 18-hydroxycorticosterone + 2 reduced [adrenodoxin] + O2 + 2 H(+) = aldosterone + 2 oxidized [adrenodoxin] + 2 H2O. It catalyses the reaction 21-hydroxyprogesterone + 2 reduced [adrenodoxin] + O2 + 2 H(+) = 19-hydroxy-11-deoxycorticosterone + 2 oxidized [adrenodoxin] + H2O. The catalysed reaction is 19-hydroxy-11-deoxycorticosterone + 2 reduced [adrenodoxin] + O2 + 2 H(+) = 19-oxo-11-deoxycorticosterone + 2 oxidized [adrenodoxin] + 2 H2O. Its pathway is steroid biosynthesis; glucocorticoid biosynthesis. The protein operates within steroid hormone biosynthesis. A cytochrome P450 monooxygenase that catalyzes the biosynthesis of aldosterone and other adrenal corticoids. Differing from other species (such as human, rat and mice), it is able to catalyze three sequential oxidative reactions of 11-deoxycorticosterone (21-hydroxyprogesterone), namely 11-beta hydroxylation, followed by two successive oxidations at C18 yielding 18-hydroxy and then 18-oxo intermediates, and ending with the formation of aldosterone. Steroid 11beta, 18- and 19-hydroxylase. Mechanistically, uses molecular oxygen inserting one oxygen atom into a substrate and reducing the second into a water molecule. Two electrons are provided by NADPH via a two-protein mitochondrial transfer system comprising flavoprotein FDXR (adrenodoxin/ferredoxin reductase) and nonheme iron-sulfur protein FDX1 or FDX2 (adrenodoxin/ferredoxin). This Ovis aries (Sheep) protein is Cytochrome P450 11B1, mitochondrial (CYP11B1).